Here is a 292-residue protein sequence, read N- to C-terminus: Syntenin-2 (292 aa).

2 consecutive PDZ domains span residues 108–187 and 192–267; these read EIHL…IRDR and TVTM…IPTV.

As to quaternary structure, monomer and homodimer. Interacts with SDCBP. Interacts with TM4SF1.

It is found in the cytoplasm. It localises to the nucleus. The protein resides in the nucleolus. Its subcellular location is the nucleoplasm. The protein localises to the cell membrane. It is found in the nucleus speckle. Functionally, binds phosphatidylinositol 4,5-bisphosphate (PIP2). May play a role in the organization of nuclear PIP2, cell division and cell survival. This chain is Syntenin-2 (Sdcbp2), found in Mus musculus (Mouse).